Reading from the N-terminus, the 374-residue chain is MYFQKARLIHAELPLLAPFKTSYGELKSKDFYIIELINEEGIHGYGELEAFPLPDYTEETLSSAILIIKEQLLPLLAQRKIRKPEEIQELFSWIQGNEMAKAAVELAVWDAFAKMEKRSLAKMIGATKESIKVGVSIGLQQNVETLLQLVNQYVDQGYERVKLKIAPNKDIQFVEAVRKSFPKLSLMADANSAYNREDFLLLKELDQYDLEMIEQPFGTKDFVDHAWLQKQLKTRICLDENIRSVKDVEQAHSIGSCRAINLKLARVGGMSSALKIAEYCALNEILVWCGGMLEAGVGRAHNIALAARNEFVFPGDISASNRFFAEDIVTPAFELNQGRLKVPTNEGIGVTLDLKVLKKYTKSTEEILLNKGWS.

The active-site Proton donor is the K164. Mg(2+)-binding residues include D189, E214, and D239. K263 acts as the Proton acceptor in catalysis.

Belongs to the mandelate racemase/muconate lactonizing enzyme family. MenC type 2 subfamily. Homodimer. A divalent metal cation serves as cofactor.

It carries out the reaction (1R,6R)-6-hydroxy-2-succinyl-cyclohexa-2,4-diene-1-carboxylate = 2-succinylbenzoate + H2O. It functions in the pathway quinol/quinone metabolism; 1,4-dihydroxy-2-naphthoate biosynthesis; 1,4-dihydroxy-2-naphthoate from chorismate: step 4/7. Its pathway is quinol/quinone metabolism; menaquinone biosynthesis. Its function is as follows. Converts 2-succinyl-6-hydroxy-2,4-cyclohexadiene-1-carboxylate (SHCHC) to 2-succinylbenzoate (OSB). Also acts as a N-succinylamino acid racemase (NSAR) that catalyzes the racemization of N-succinyl-L-phenylglycine. L.innocua has the menaquinone synthesis pathway, indicating that the species requires OSBS activity. However, the NSAR/OSBS is not encoded in the menaquinone operon, raising the possibility that both NSAR and OSBS are biological functions. The protein is o-succinylbenzoate synthase of Listeria innocua serovar 6a (strain ATCC BAA-680 / CLIP 11262).